The following is a 399-amino-acid chain: Nicotinate phosphoribosyltransferase (399 aa).

Histidine 217 is subject to Phosphohistidine; by autocatalysis.

The protein belongs to the NAPRTase family. Transiently phosphorylated on a His residue during the reaction cycle. Phosphorylation strongly increases the affinity for substrates and increases the rate of nicotinate D-ribonucleotide production. Dephosphorylation regenerates the low-affinity form of the enzyme, leading to product release.

The enzyme catalyses nicotinate + 5-phospho-alpha-D-ribose 1-diphosphate + ATP + H2O = nicotinate beta-D-ribonucleotide + ADP + phosphate + diphosphate. It functions in the pathway cofactor biosynthesis; NAD(+) biosynthesis; nicotinate D-ribonucleotide from nicotinate: step 1/1. Functionally, catalyzes the synthesis of beta-nicotinate D-ribonucleotide from nicotinate and 5-phospho-D-ribose 1-phosphate at the expense of ATP. The sequence is that of Nicotinate phosphoribosyltransferase from Burkholderia mallei (strain ATCC 23344).